The primary structure comprises 105 residues: Ferredoxin--nitrite reductase, chloroplastic (105 aa).

[4Fe-4S] cluster-binding residues include cysteine 28 and cysteine 32. A siroheme-binding site is contributed by cysteine 32.

The protein belongs to the nitrite and sulfite reductase 4Fe-4S domain family. In terms of assembly, monomer. It depends on siroheme as a cofactor. Requires [4Fe-4S] cluster as cofactor. In terms of tissue distribution, highest expression in roots and hypocotyls. Some expression in cotyledonary whorls.

The protein resides in the plastid. The protein localises to the chloroplast. The enzyme catalyses 6 oxidized [2Fe-2S]-[ferredoxin] + NH4(+) + 2 H2O = nitrite + 6 reduced [2Fe-2S]-[ferredoxin] + 8 H(+). Its pathway is nitrogen metabolism; nitrate reduction (assimilation). This Pinus sylvestris (Scotch pine) protein is Ferredoxin--nitrite reductase, chloroplastic (NIR).